The primary structure comprises 327 residues: Zinc transport protein ZntB (327 aa).

Over 1–273 (MEAIKGSDVN…ARRTYTMSLM (273 aa)) the chain is Cytoplasmic. The chain crosses the membrane as a helical span at residues 274–294 (AMVFLPSTFLTGLFGVNLGGI). The Periplasmic segment spans residues 295-300 (PGGGWQ). The chain crosses the membrane as a helical span at residues 301–321 (FGFSIFCILLVVLIGGVALWL). The Cytoplasmic portion of the chain corresponds to 322-327 (HRSKWL).

Belongs to the CorA metal ion transporter (MIT) (TC 1.A.35) family.

It is found in the cell inner membrane. The catalysed reaction is Zn(2+)(out) + H(+)(out) = Zn(2+)(in) + H(+)(in). Zinc transporter. Acts as a Zn(2+):proton symporter, which likely mediates zinc ion uptake. The polypeptide is Zinc transport protein ZntB (Escherichia coli O139:H28 (strain E24377A / ETEC)).